Here is a 512-residue protein sequence, read N- to C-terminus: Calcium-dependent protein kinase 18 (512 aa).

A disordered region spans residues 1–25; it reads MGLCSSSSARRDAGTPGGGNGAGNK. Glycine 2 carries the N-myristoyl glycine lipid modification. A Protein kinase domain is found at 52–312; the sequence is YALGKLLGHG…AAQALSHEWV (261 aa). ATP-binding positions include 58 to 66 and lysine 81; that span reads LGHGQFGYT. Aspartate 178 (proton acceptor) is an active-site residue. The interval 318–348 is autoinhibitory domain; that stretch reads ASDIPLDISVLHNMRQFVKYSRFKQFALRAL. EF-hand domains are found at residues 355–390, 392–427, 434–469, and 472–499; these read EELS…DVPW, LKGP…VHQL, KWKS…KGSI, and LLEE…ASMS. Ca(2+)-binding residues include aspartate 368, aspartate 370, asparagine 372, threonine 374, glutamate 379, aspartate 405, asparagine 407, aspartate 409, glutamate 416, aspartate 447, aspartate 449, aspartate 451, tyrosine 453, glutamate 458, aspartate 477, aspartate 479, aspartate 481, lysine 483, and glutamate 488.

The protein belongs to the protein kinase superfamily. Ser/Thr protein kinase family. CDPK subfamily. As to quaternary structure, interacts with MPK5. Autophosphorylated. Phosphorylated by MPK5.

The protein localises to the cell membrane. The catalysed reaction is L-seryl-[protein] + ATP = O-phospho-L-seryl-[protein] + ADP + H(+). It carries out the reaction L-threonyl-[protein] + ATP = O-phospho-L-threonyl-[protein] + ADP + H(+). Its activity is regulated as follows. Activated by calcium. Autophosphorylation may play an important role in the regulation of the kinase activity. Functionally, may play a role in signal transduction pathways that involve calcium as a second messenger. Functions upstream of MPK5 in a signaling pathway that represses defense gene expression and negatively regulates resistance to rice blast fungus. Phosphorylates MPK5 at Thr-14 and Thr-32 and activates MPK5 independently of MAP kinase kinase (MKK) phosphorylation. May be involved in arbuscular mycorrhizal presymbiotic phase signaling. Phosphorylates the elicitor-responsive protein ERG1 in vitro. Phosphorylation is calcium-dependent. This Oryza sativa subsp. japonica (Rice) protein is Calcium-dependent protein kinase 18.